Here is a 154-residue protein sequence, read N- to C-terminus: Large ribosomal subunit protein bL9 (154 aa).

The protein belongs to the bacterial ribosomal protein bL9 family.

Its function is as follows. Binds to the 23S rRNA. In Buchnera aphidicola subsp. Baizongia pistaciae (strain Bp), this protein is Large ribosomal subunit protein bL9.